The sequence spans 235 residues: Urease accessory protein UreF (235 aa).

It belongs to the UreF family. As to quaternary structure, ureD, UreF and UreG form a complex that acts as a GTP-hydrolysis-dependent molecular chaperone, activating the urease apoprotein by helping to assemble the nickel containing metallocenter of UreC. The UreE protein probably delivers the nickel.

It is found in the cytoplasm. Functionally, required for maturation of urease via the functional incorporation of the urease nickel metallocenter. The sequence is that of Urease accessory protein UreF from Haemophilus influenzae (strain 86-028NP).